The primary structure comprises 83 residues: uncharacterized protein (83 aa).

The chain crosses the membrane as a helical span at residues 24–44 (AMTLLIITNTLLIILSYSVLL).

It localises to the host membrane. This is an uncharacterized protein from Acidianus sp. F28 (AFV-2).